Reading from the N-terminus, the 419-residue chain is Murein hydrolase activator EnvC (419 aa).

Positions M1–A34 are cleaved as a signal peptide. Coiled coils occupy residues D35–A124 and L155–K271. Residues E252–R270 show a composition bias toward basic and acidic residues. Residues E252–G290 form a disordered region.

It belongs to the peptidase M23B family.

Its subcellular location is the periplasm. In terms of biological role, activator of the cell wall hydrolases AmiA and AmiB. Required for septal murein cleavage and daughter cell separation during cell division. In vitro, exhibits weak endoproteolytic activity on beta-casein. The polypeptide is Murein hydrolase activator EnvC (envC) (Escherichia coli (strain K12)).